A 159-amino-acid chain; its full sequence is Ribosomal RNA large subunit methyltransferase H (159 aa).

Residues Leu-76, Gly-108, and 127–132 each bind S-adenosyl-L-methionine; that span reads FGKLTL.

This sequence belongs to the RNA methyltransferase RlmH family. Homodimer.

It localises to the cytoplasm. It carries out the reaction pseudouridine(1915) in 23S rRNA + S-adenosyl-L-methionine = N(3)-methylpseudouridine(1915) in 23S rRNA + S-adenosyl-L-homocysteine + H(+). Functionally, specifically methylates the pseudouridine at position 1915 (m3Psi1915) in 23S rRNA. In Latilactobacillus sakei subsp. sakei (strain 23K) (Lactobacillus sakei subsp. sakei), this protein is Ribosomal RNA large subunit methyltransferase H.